We begin with the raw amino-acid sequence, 992 residues long: Disks large-associated protein 4 (992 aa).

The span at 1-20 shows a compositional bias: basic and acidic residues; sequence MKGLGDSRPRHLSDSLDPPH. Disordered regions lie at residues 1-31 and 157-225; these read MKGL…DRNP and MEGT…PASG. A compositionally biased stretch (gly residues) spans 162-171; sequence GKVGGNGSKK. Over residues 172–194 the composition is skewed to basic and acidic residues; sequence GGLEDGKGRRAKSKERAKAGEPK. The span at 199–208 shows a compositional bias: polar residues; that stretch reads SNISGWWSSD. S206 and S207 each carry phosphoserine. R290 is subject to Omega-N-methylarginine. The segment at 342 to 396 is disordered; the sequence is TTLLSPRDMDSTAEGPIPCRRMRSGSYIKAMGDEDSDESGGGSPKPSPKTAARRQ. S377, S380, S384, S388, S405, S415, and S421 each carry phosphoserine. 3 disordered regions span residues 527 to 751, 763 to 798, and 915 to 992; these read SVSL…GPRQ, SYGD…AQPG, and TPEK…QTRL. A compositionally biased stretch (low complexity) spans 528–554; it reads VSLQSLSPPPSTGSLSNSRTLPSSSCL. The segment covering 576–591 has biased composition (polar residues); the sequence is VTVQSSTESAQDTYLD. Residues S580, S581, S609, S611, S665, and S744 each carry the phosphoserine modification. Low complexity predominate over residues 600–620; the sequence is TSQSGLSNSSDSLDSSTRPPS. A Phosphothreonine modification is found at T915. 2 stretches are compositionally biased toward basic and acidic residues: residues 915–925 and 940–958; these read TPEKRKEEKKP and VSRD…EARK. The span at 969-978 shows a compositional bias: polar residues; the sequence is VRQNSATESA. The residue at position 973 (S973) is a Phosphoserine.

It belongs to the SAPAP family. Interacts with DLG1 and DLG4/PSD-95.

The protein localises to the membrane. Functionally, may play a role in the molecular organization of synapses and neuronal cell signaling. Could be an adapter protein linking ion channel to the subsynaptic cytoskeleton. May induce enrichment of PSD-95/SAP90 at the plasma membrane. The polypeptide is Disks large-associated protein 4 (Dlgap4) (Mus musculus (Mouse)).